The following is a 226-amino-acid chain: MDERLFTFAGLINPNHDFIIGFHTLLVAVILLILARYATHKMQVVPSGIQNVFEFIISGIISFAKDIVGEQVARKYFPLAATIAFLVFFGNAIGIIPGFEAPTSSWSFTLVLALVVFFYYHFEGIRAQGVLKYFKHFMGPVWWLAPLMFPVEIISHFSRIISLSFRLFGNIKGDDMFLLVMLMLAPWIVPVAPFAILTFMALLQAFVFMILTYVYIHGAVVVDEEH.

A run of 7 helical transmembrane segments spans residues F18–A38, V44–A64, L79–F99, S105–I125, F137–F157, F177–L197, and L202–V222.

It belongs to the ATPase A chain family. In terms of assembly, F-type ATPases have 2 components, CF(1) - the catalytic core - and CF(0) - the membrane proton channel. CF(1) has five subunits: alpha(3), beta(3), gamma(1), delta(1), epsilon(1). CF(0) has three main subunits: a(1), b(2) and c(9-12). The alpha and beta chains form an alternating ring which encloses part of the gamma chain. CF(1) is attached to CF(0) by a central stalk formed by the gamma and epsilon chains, while a peripheral stalk is formed by the delta and b chains.

The protein localises to the cell inner membrane. Functionally, key component of the proton channel; it plays a direct role in the translocation of protons across the membrane. The sequence is that of ATP synthase subunit a from Helicobacter hepaticus (strain ATCC 51449 / 3B1).